Here is a 142-residue protein sequence, read N- to C-terminus: Putative pre-16S rRNA nuclease (142 aa).

Belongs to the YqgF nuclease family.

It localises to the cytoplasm. In terms of biological role, could be a nuclease involved in processing of the 5'-end of pre-16S rRNA. The polypeptide is Putative pre-16S rRNA nuclease (Ruminiclostridium cellulolyticum (strain ATCC 35319 / DSM 5812 / JCM 6584 / H10) (Clostridium cellulolyticum)).